Here is a 448-residue protein sequence, read N- to C-terminus: Squalene synthase ERG9 (448 aa).

Residues 428–448 (CNVVLFGIGALILSLIYFVLY) form a helical membrane-spanning segment.

It belongs to the phytoene/squalene synthase family. Mg(2+) is required as a cofactor.

It localises to the endoplasmic reticulum membrane. The protein resides in the microsome. The catalysed reaction is 2 (2E,6E)-farnesyl diphosphate + NADPH + H(+) = squalene + 2 diphosphate + NADP(+). The enzyme catalyses 2 (2E,6E)-farnesyl diphosphate + NADH + H(+) = squalene + 2 diphosphate + NAD(+). Its pathway is terpene metabolism; lanosterol biosynthesis; lanosterol from farnesyl diphosphate: step 1/3. Squalene synthase; part of the third module of ergosterol biosynthesis pathway that includes the late steps of the pathway. ERG9 produces squalene from 2 farnesyl pyrophosphate moieties. The third module or late pathway involves the ergosterol synthesis itself through consecutive reactions that mainly occur in the endoplasmic reticulum (ER) membrane. Firstly, the squalene synthase ERG9 catalyzes the condensation of 2 farnesyl pyrophosphate moieties to form squalene, which is the precursor of all steroids. Squalene synthase is crucial for balancing the incorporation of farnesyl diphosphate (FPP) into sterol and nonsterol isoprene synthesis. Secondly, the squalene epoxidase ERG1 catalyzes the stereospecific oxidation of squalene to (S)-2,3-epoxysqualene, which is considered to be a rate-limiting enzyme in steroid biosynthesis. Then, the lanosterol synthase ERG7 catalyzes the cyclization of (S)-2,3 oxidosqualene to lanosterol, a reaction that forms the sterol core. In the next steps, lanosterol is transformed to zymosterol through a complex process involving various demethylation, reduction and desaturation reactions. The lanosterol 14-alpha-demethylase ERG11 (also known as CYP51) catalyzes C14-demethylation of lanosterol to produce 4,4'-dimethyl cholesta-8,14,24-triene-3-beta-ol, which is critical for ergosterol biosynthesis. The C-14 reductase ERG24 reduces the C14=C15 double bond of 4,4-dimethyl-cholesta-8,14,24-trienol to produce 4,4-dimethyl-cholesta-8,24-dienol. 4,4-dimethyl-cholesta-8,24-dienol is substrate of the C-4 demethylation complex ERG25-ERG26-ERG27 in which ERG25 catalyzes the three-step monooxygenation required for the demethylation of 4,4-dimethyl and 4alpha-methylsterols, ERG26 catalyzes the oxidative decarboxylation that results in a reduction of the 3-beta-hydroxy group at the C-3 carbon to an oxo group, and ERG27 is responsible for the reduction of the keto group on the C-3. ERG28 has a role as a scaffold to help anchor ERG25, ERG26 and ERG27 to the endoplasmic reticulum and ERG29 regulates the activity of the iron-containing C4-methylsterol oxidase ERG25. Then, the sterol 24-C-methyltransferase ERG6 catalyzes the methyl transfer from S-adenosyl-methionine to the C-24 of zymosterol to form fecosterol. The C-8 sterol isomerase ERG2 catalyzes the reaction which results in unsaturation at C-7 in the B ring of sterols and thus converts fecosterol to episterol. The sterol-C5-desaturase ERG3 then catalyzes the introduction of a C-5 double bond in the B ring to produce 5-dehydroepisterol. The C-22 sterol desaturase ERG5 further converts 5-dehydroepisterol into ergosta-5,7,22,24(28)-tetraen-3beta-ol by forming the C-22(23) double bond in the sterol side chain. Finally, ergosta-5,7,22,24(28)-tetraen-3beta-ol is substrate of the C-24(28) sterol reductase ERG4 to produce ergosterol. This chain is Squalene synthase ERG9, found in Candida albicans (strain SC5314 / ATCC MYA-2876) (Yeast).